The chain runs to 250 residues: Probable dihydroorotate dehydrogenase B (NAD(+)), electron transfer subunit (250 aa).

Residues 1–89 (MINLKIEENV…RGPYGNGFDV (89 aa)) enclose the FAD-binding FR-type domain. 4 residues coordinate [2Fe-2S] cluster: Cys-200, Cys-205, Cys-208, and Cys-216.

Belongs to the PyrK family. In terms of assembly, heterotetramer of 2 PyrK and 2 PyrD type B subunits. Requires [2Fe-2S] cluster as cofactor. FAD serves as cofactor.

Its pathway is pyrimidine metabolism; UMP biosynthesis via de novo pathway; orotate from (S)-dihydroorotate (NAD(+) route): step 1/1. In terms of biological role, responsible for channeling the electrons from the oxidation of dihydroorotate from the FMN redox center in the PyrD type B subunit to the ultimate electron acceptor NAD(+). In Thermoplasma volcanium (strain ATCC 51530 / DSM 4299 / JCM 9571 / NBRC 15438 / GSS1), this protein is Probable dihydroorotate dehydrogenase B (NAD(+)), electron transfer subunit.